The sequence spans 834 residues: Mannosyl-oligosaccharide glucosidase (834 aa).

Positions 1–10 are enriched in basic residues; that stretch reads MARGERRRRA. At 1–36 the chain is on the cytoplasmic side; sequence MARGERRRRAAAAEGARPLERARGAGRRDGRAGGAR. Positions 1–37 are disordered; that stretch reads MARGERRRRAAAAEGARPLERARGAGRRDGRAGGARG. The Endoplasmic reticulum targeting motif lies at 3–9; the sequence is RGERRRR. The segment covering 17–31 has biased composition (basic and acidic residues); sequence RPLERARGAGRRDGR. The chain crosses the membrane as a helical; Signal-anchor for type II membrane protein span at residues 37–57; sequence GSAGGAALAVVVLALAFGLSG. Over 58–834 the chain is Lumenal; it reads RWVLAWLGVR…LVLLIMAEEY (777 aa). Residues 74 to 136 are required for endoplasmic reticulum targeting; that stretch reads PAPSALPPDS…GTPPKLRHTC (63 aa). Asp580 acts as the Proton donor in catalysis. N-linked (GlcNAc...) asparagine glycosylation occurs at Asn654. The active-site Proton acceptor is the Glu804.

The protein belongs to the glycosyl hydrolase 63 family.

It is found in the endoplasmic reticulum membrane. It catalyses the reaction N(4)-(alpha-D-Glc-(1-&gt;2)-alpha-D-Glc-(1-&gt;3)-alpha-D-Glc-(1-&gt;3)-alpha-D-Man-(1-&gt;2)-alpha-D-Man-(1-&gt;2)-alpha-D-Man-(1-&gt;3)-[alpha-D-Man-(1-&gt;2)-alpha-D-Man-(1-&gt;3)-[alpha-D-Man-(1-&gt;2)-alpha-D-Man-(1-&gt;6)]-alpha-D-Man-(1-&gt;6)]-beta-D-Man-(1-&gt;4)-beta-D-GlcNAc-(1-&gt;4)-beta-D-GlcNAc)-L-asparaginyl-[protein] + H2O = N(4)-(alpha-D-Glc-(1-&gt;3)-alpha-D-Glc-(1-&gt;3)-alpha-D-Man-(1-&gt;2)-alpha-D-Man-(1-&gt;2)-alpha-D-Man-(1-&gt;3)-[alpha-D-Man-(1-&gt;2)-alpha-D-Man-(1-&gt;3)-[alpha-D-Man-(1-&gt;2)-alpha-D-Man-(1-&gt;6)]-alpha-D-Man-(1-&gt;6)]-beta-D-Man-(1-&gt;4)-beta-D-GlcNAc-(1-&gt;4)-beta-D-GlcNAc)-L-asparaginyl-[protein] + beta-D-glucose. The protein operates within glycan metabolism; N-glycan degradation. In terms of biological role, in the context of N-glycan degradation, cleaves the distal alpha 1,2-linked glucose residue from the Glc(3)Man(9)GlcNAc(2) oligosaccharide precursor in a highly specific manner. The polypeptide is Mannosyl-oligosaccharide glucosidase (Rattus norvegicus (Rat)).